The sequence spans 107 residues: UPF0145 protein BVU_2335 (107 aa).

It belongs to the UPF0145 family.

This Phocaeicola vulgatus (strain ATCC 8482 / DSM 1447 / JCM 5826 / CCUG 4940 / NBRC 14291 / NCTC 11154) (Bacteroides vulgatus) protein is UPF0145 protein BVU_2335.